The sequence spans 165 residues: Protein SprT (165 aa).

The region spanning 10 to 158 (EACYRQAEHF…CRRCKATLVF (149 aa)) is the SprT-like domain. Position 69 (histidine 69) interacts with Zn(2+). Residue glutamate 70 is part of the active site. Histidine 73 is a Zn(2+) binding site.

It belongs to the SprT family. The cofactor is Zn(2+).

Its subcellular location is the cytoplasm. In Pseudomonas aeruginosa (strain UCBPP-PA14), this protein is Protein SprT.